Reading from the N-terminus, the 133-residue chain is uncharacterized protein (133 aa).

The FAS1 domain occupies 1–130; the sequence is MPNIVEIAVS…GIIHVIDNVI (130 aa).

This is an uncharacterized protein from Synechocystis sp. (strain ATCC 27184 / PCC 6803 / Kazusa).